The sequence spans 234 residues: MKLLISPINKEEAIIASRGGADIVDVKNPKEGSLGANFPWVIRDVKGAVNGRQPISATIGDFNYKPGTASLAAFGAAVAGADYIKVGLYDIQTEDQALELITKITQAVKDYDSTKKVVASGYSDYKRINSISPLLLPSIAAKAGADVVMVDTGIKDGKSTFEFMDEEELKKFTGLAHECGLENAIAGSLKFEDLPVLERIGPDIIGVRGMVCGGDRTNSIRQELVEKLVAECQA.

The active-site Schiff-base intermediate with substrate is the Lys-27. Lys-85 (proton acceptor) is an active-site residue.

The protein belongs to the MfnB family.

It carries out the reaction 2 D-glyceraldehyde 3-phosphate = 4-(hydroxymethyl)-2-furancarboxaldehyde phosphate + phosphate + 2 H2O. The protein operates within cofactor biosynthesis; methanofuran biosynthesis. Catalyzes the formation of 4-(hydroxymethyl)-2-furancarboxaldehyde phosphate (4-HFC-P) from two molecules of glyceraldehyde-3-P (GA-3-P). The chain is (5-formylfuran-3-yl)methyl phosphate synthase from Methanosarcina barkeri (strain Fusaro / DSM 804).